Reading from the N-terminus, the 112-residue chain is Large ribosomal subunit protein eL30 (112 aa).

It belongs to the eukaryotic ribosomal protein eL30 family.

The chain is Large ribosomal subunit protein eL30 (rpl30) from Dictyostelium discoideum (Social amoeba).